Here is a 202-residue protein sequence, read N- to C-terminus: Orotate phosphoribosyltransferase (202 aa).

Residues arginine 94, lysine 98, histidine 100, and 120 to 128 (EDLISTGGS) contribute to the 5-phospho-alpha-D-ribose 1-diphosphate site. Serine 124 is a binding site for orotate.

Belongs to the purine/pyrimidine phosphoribosyltransferase family. PyrE subfamily. In terms of assembly, homodimer. Mg(2+) is required as a cofactor.

The enzyme catalyses orotidine 5'-phosphate + diphosphate = orotate + 5-phospho-alpha-D-ribose 1-diphosphate. It participates in pyrimidine metabolism; UMP biosynthesis via de novo pathway; UMP from orotate: step 1/2. Its function is as follows. Catalyzes the transfer of a ribosyl phosphate group from 5-phosphoribose 1-diphosphate to orotate, leading to the formation of orotidine monophosphate (OMP). The chain is Orotate phosphoribosyltransferase from Oceanobacillus iheyensis (strain DSM 14371 / CIP 107618 / JCM 11309 / KCTC 3954 / HTE831).